A 610-amino-acid polypeptide reads, in one-letter code: Elongation factor 4 (610 aa).

A tr-type G domain is found at Ser-7–Lys-189. GTP-binding positions include Asp-19–Thr-24 and Asn-136–Asp-139.

Belongs to the TRAFAC class translation factor GTPase superfamily. Classic translation factor GTPase family. LepA subfamily.

It localises to the cell inner membrane. The catalysed reaction is GTP + H2O = GDP + phosphate + H(+). Required for accurate and efficient protein synthesis under certain stress conditions. May act as a fidelity factor of the translation reaction, by catalyzing a one-codon backward translocation of tRNAs on improperly translocated ribosomes. Back-translocation proceeds from a post-translocation (POST) complex to a pre-translocation (PRE) complex, thus giving elongation factor G a second chance to translocate the tRNAs correctly. Binds to ribosomes in a GTP-dependent manner. This is Elongation factor 4 from Thermus thermophilus (strain ATCC 27634 / DSM 579 / HB8).